Consider the following 378-residue polypeptide: Glutamate 5-kinase (378 aa).

Lysine 19 contributes to the ATP binding site. 3 residues coordinate substrate: serine 60, aspartate 147, and asparagine 159. ATP is bound by residues 179-180 and 221-227; these read SD and SGGMRTK. Residues 285–362 enclose the PUA domain; the sequence is KGTLTIDAGA…GEMEQLLGYR (78 aa).

It belongs to the glutamate 5-kinase family.

It is found in the cytoplasm. It carries out the reaction L-glutamate + ATP = L-glutamyl 5-phosphate + ADP. The protein operates within amino-acid biosynthesis; L-proline biosynthesis; L-glutamate 5-semialdehyde from L-glutamate: step 1/2. Functionally, catalyzes the transfer of a phosphate group to glutamate to form L-glutamate 5-phosphate. In Gluconobacter oxydans (strain 621H) (Gluconobacter suboxydans), this protein is Glutamate 5-kinase.